We begin with the raw amino-acid sequence, 332 residues long: uncharacterized protein (332 aa).

Positions 1–26 (MSSLGKLLKLTLLGILLSFSCKFVFG) are cleaved as a signal peptide.

Its subcellular location is the endoplasmic reticulum. This is an uncharacterized protein from Schizosaccharomyces pombe (strain 972 / ATCC 24843) (Fission yeast).